A 59-amino-acid chain; its full sequence is U-scoloptoxin(23)-Er2a (59 aa).

The protein belongs to the scoloptoxin-23 family. Post-translationally, contains 1 disulfide bond. As to expression, expressed by the venom gland.

It is found in the secreted. The sequence is that of U-scoloptoxin(23)-Er2a from Ethmostigmus rubripes (Giant centipede).